A 482-amino-acid polypeptide reads, in one-letter code: BEL1-like homeodomain protein 7 (482 aa).

An SR/KY domain region spans residues 118–134; the sequence is SKYLKAAQELLDETVNV. Positions 167-238 are BELL domain; that stretch reads ERQELQSKLS…CLRDAISGQI (72 aa). The segment at residues 285–347 is a DNA-binding region (homeobox); the sequence is TWRPQRGLPD…NARVRLWKPM (63 aa). The disordered stretch occupies residues 358–401; that stretch reads DALQENDPNQSSENTPEITEIQELQTESSSNNGHVPGVASSSMR. Residues 363–401 are compositionally biased toward polar residues; the sequence is NDPNQSSENTPEITEIQELQTESSSNNGHVPGVASSSMR.

The protein belongs to the TALE/BELL homeobox family. May form heterodimeric complexes with TALE/KNOX proteins.

It localises to the nucleus. This is BEL1-like homeodomain protein 7 (BLH7) from Arabidopsis thaliana (Mouse-ear cress).